A 141-amino-acid chain; its full sequence is Large ribosomal subunit protein uL11 (141 aa).

This sequence belongs to the universal ribosomal protein uL11 family. As to quaternary structure, part of the ribosomal stalk of the 50S ribosomal subunit. Interacts with L10 and the large rRNA to form the base of the stalk. L10 forms an elongated spine to which L12 dimers bind in a sequential fashion forming a multimeric L10(L12)X complex. Post-translationally, one or more lysine residues are methylated.

Functionally, forms part of the ribosomal stalk which helps the ribosome interact with GTP-bound translation factors. This is Large ribosomal subunit protein uL11 from Microcystis aeruginosa (strain NIES-843 / IAM M-2473).